A 64-amino-acid polypeptide reads, in one-letter code: Large ribosomal subunit protein bL35 (64 aa).

This sequence belongs to the bacterial ribosomal protein bL35 family.

The protein is Large ribosomal subunit protein bL35 of Vibrio parahaemolyticus serotype O3:K6 (strain RIMD 2210633).